Consider the following 89-residue polypeptide: Small ribosomal subunit protein uS15 (89 aa).

The protein belongs to the universal ribosomal protein uS15 family. Part of the 30S ribosomal subunit. Forms a bridge to the 50S subunit in the 70S ribosome, contacting the 23S rRNA.

Functionally, one of the primary rRNA binding proteins, it binds directly to 16S rRNA where it helps nucleate assembly of the platform of the 30S subunit by binding and bridging several RNA helices of the 16S rRNA. In terms of biological role, forms an intersubunit bridge (bridge B4) with the 23S rRNA of the 50S subunit in the ribosome. This chain is Small ribosomal subunit protein uS15, found in Polynucleobacter necessarius subsp. necessarius (strain STIR1).